A 126-amino-acid polypeptide reads, in one-letter code: Large ribosomal subunit protein uL14 (126 aa).

It belongs to the universal ribosomal protein uL14 family. As to quaternary structure, part of the 50S ribosomal subunit. Forms a cluster with proteins L3 and L19. In the 70S ribosome, L14 and L19 interact and together make contacts with the 16S rRNA in bridges B5 and B8.

Its function is as follows. Binds to 23S rRNA. Forms part of two intersubunit bridges in the 70S ribosome. The polypeptide is Large ribosomal subunit protein uL14 (Persephonella marina (strain DSM 14350 / EX-H1)).